Here is a 484-residue protein sequence, read N- to C-terminus: Glycogen synthase (484 aa).

Lys-21 is a binding site for ADP-alpha-D-glucose.

This sequence belongs to the glycosyltransferase 1 family. Bacterial/plant glycogen synthase subfamily.

It carries out the reaction [(1-&gt;4)-alpha-D-glucosyl](n) + ADP-alpha-D-glucose = [(1-&gt;4)-alpha-D-glucosyl](n+1) + ADP + H(+). It participates in glycan biosynthesis; glycogen biosynthesis. Synthesizes alpha-1,4-glucan chains using ADP-glucose. The sequence is that of Glycogen synthase from Pseudomonas syringae pv. tomato (strain ATCC BAA-871 / DC3000).